The sequence spans 249 residues: U1 small nuclear ribonucleoprotein usp102 (249 aa).

Residues Met-1–Ser-25 are disordered. Positions Glu-26–Ser-105 constitute an RRM 1 domain. The interval Arg-113–Val-157 is disordered. Basic and acidic residues predominate over residues Glu-114 to Lys-134. Positions Lys-174–Lys-247 constitute an RRM 2 domain.

The protein belongs to the RRM U1 A/B'' family. Component of the spliceosome where it is associated with snRNP U1.

The protein resides in the nucleus. The protein localises to the nucleolus. Involved in nuclear mRNA splicing. The chain is U1 small nuclear ribonucleoprotein usp102 from Schizosaccharomyces pombe (strain 972 / ATCC 24843) (Fission yeast).